The chain runs to 163 residues: Arginine repressor (163 aa).

Belongs to the ArgR family.

It is found in the cytoplasm. Its pathway is amino-acid biosynthesis; L-arginine biosynthesis [regulation]. Regulates arginine biosynthesis genes. The chain is Arginine repressor from Corynebacterium diphtheriae (strain ATCC 700971 / NCTC 13129 / Biotype gravis).